Reading from the N-terminus, the 441-residue chain is Ribulose bisphosphate carboxylase large chain (441 aa).

Lys-5 carries the N6,N6,N6-trimethyllysine modification. Substrate contacts are provided by Asn-114 and Thr-164. The active-site Proton acceptor is the Lys-166. Residue Lys-168 coordinates substrate. 3 residues coordinate Mg(2+): Lys-192, Asp-194, and Glu-195. At Lys-192 the chain carries N6-carboxylysine. Residue His-285 is the Proton acceptor of the active site. 3 residues coordinate substrate: Arg-286, His-318, and Ser-370.

This sequence belongs to the RuBisCO large chain family. Type I subfamily. In terms of assembly, heterohexadecamer of 8 large chains and 8 small chains; disulfide-linked. The disulfide link is formed within the large subunit homodimers. Mg(2+) is required as a cofactor. Post-translationally, the disulfide bond which can form in the large chain dimeric partners within the hexadecamer appears to be associated with oxidative stress and protein turnover.

The protein resides in the plastid. Its subcellular location is the chloroplast. The catalysed reaction is 2 (2R)-3-phosphoglycerate + 2 H(+) = D-ribulose 1,5-bisphosphate + CO2 + H2O. It catalyses the reaction D-ribulose 1,5-bisphosphate + O2 = 2-phosphoglycolate + (2R)-3-phosphoglycerate + 2 H(+). Its function is as follows. RuBisCO catalyzes two reactions: the carboxylation of D-ribulose 1,5-bisphosphate, the primary event in carbon dioxide fixation, as well as the oxidative fragmentation of the pentose substrate in the photorespiration process. Both reactions occur simultaneously and in competition at the same active site. This chain is Ribulose bisphosphate carboxylase large chain, found in Argyrochosma delicatula (Delicate cloak fern).